A 354-amino-acid chain; its full sequence is uncharacterized protein (354 aa).

It belongs to the asfivirus B354L family.

This is an uncharacterized protein from African swine fever virus (isolate Tick/South Africa/Pretoriuskop Pr4/1996) (ASFV).